Here is a 56-residue protein sequence, read N- to C-terminus: Bowman-Birk type proteinase inhibitor I-2B (56 aa).

Intrachain disulfides connect C10-C25, C15-C23, C32-C39, and C36-C51.

This sequence belongs to the Bowman-Birk serine protease inhibitor family.

The sequence is that of Bowman-Birk type proteinase inhibitor I-2B from Triticum aestivum (Wheat).